The primary structure comprises 339 residues: UPF0324 membrane protein spyM18_1033 (339 aa).

The next 9 membrane-spanning stretches (helical) occupy residues 7-24 (KLPG…AWYL), 28-50 (FPII…FYGH), 57-79 (GISF…GLNL), 84-106 (AVGM…VAYG), 118-140 (ATLV…APVI), 150-172 (AISV…GQLL), 256-275 (FILF…SFGV), 290-307 (FIVM…LVKL), and 314-336 (AILL…QLSL).

It belongs to the UPF0324 family.

The protein resides in the cell membrane. The polypeptide is UPF0324 membrane protein spyM18_1033 (Streptococcus pyogenes serotype M18 (strain MGAS8232)).